A 249-amino-acid polypeptide reads, in one-letter code: 2,3-bisphosphoglycerate-dependent phosphoglycerate mutase (249 aa).

Residues 8–15 (RHGQSAWN), 21–22 (TG), Arg60, 87–90 (ERHY), Lys98, 114–115 (RR), and 183–184 (GN) contribute to the substrate site. His9 functions as the Tele-phosphohistidine intermediate in the catalytic mechanism. Glu87 functions as the Proton donor/acceptor in the catalytic mechanism. The segment at 115–137 (RSYDTPPPPLPADDPRSPAGDAR) is disordered.

Belongs to the phosphoglycerate mutase family. BPG-dependent PGAM subfamily. In terms of assembly, homodimer.

The enzyme catalyses (2R)-2-phosphoglycerate = (2R)-3-phosphoglycerate. It participates in carbohydrate degradation; glycolysis; pyruvate from D-glyceraldehyde 3-phosphate: step 3/5. Catalyzes the interconversion of 2-phosphoglycerate and 3-phosphoglycerate. In Nitratidesulfovibrio vulgaris (strain DSM 19637 / Miyazaki F) (Desulfovibrio vulgaris), this protein is 2,3-bisphosphoglycerate-dependent phosphoglycerate mutase.